Reading from the N-terminus, the 235-residue chain is Class A basic helix-loop-helix protein 9 (235 aa).

Disordered stretches follow at residues 1–69 (MLRG…RRMA) and 132–235 (GHLE…HPRS). The span at 55–67 (RRRARPVRSKARR) shows a compositional bias: basic residues. The bHLH domain maps to 65-117 (ARRMAANVRERKRILDYNEAFNALRRALRHDLGGKRLSKIATLRRAIHRIAAL).

In terms of assembly, heterodimer. Efficient DNA binding requires dimerization with another bHLH protein. Interacts with TCF3, TCF4, and TCF12.

Its subcellular location is the nucleus. It is found in the cytoplasm. Transcription factor, which play a role in limb development. Is an essential player in the regulatory network governing transcription of genes implicated in limb morphogenesis. The sequence is that of Class A basic helix-loop-helix protein 9 (BHLHA9) from Homo sapiens (Human).